Here is an 87-residue protein sequence, read N- to C-terminus: RNA-binding protein Hfq (87 aa).

The Sm domain maps to 9 to 68 (DPYLNVLRKERIPVSIYLVNGIKLQGQVESFDQFVVLLKNTVSQMVYKHAISTVVPSRPV).

This sequence belongs to the Hfq family. In terms of assembly, homohexamer.

Its function is as follows. RNA chaperone that binds small regulatory RNA (sRNAs) and mRNAs to facilitate mRNA translational regulation in response to envelope stress, environmental stress and changes in metabolite concentrations. Also binds with high specificity to tRNAs. This chain is RNA-binding protein Hfq, found in Teredinibacter turnerae (strain ATCC 39867 / T7901).